The following is a 105-amino-acid chain: Cyclotide vibi-J (105 aa).

Residues alanine 1–alanine 9 form the signal peptide. The propeptide occupies threonine 10–glycine 71. The segment at residues glycine 72–asparagine 102 is a cross-link (cyclopeptide (Gly-Asn)). Disulfide bonds link cysteine 76/cysteine 92, cysteine 80/cysteine 94, and cysteine 85/cysteine 99. Residues serine 103–alanine 105 constitute a propeptide that is removed on maturation.

In terms of processing, this is a cyclic peptide.

Functionally, probably participates in a plant defense mechanism. The chain is Cyclotide vibi-J from Viola biflora (Yellow wood violet).